The chain runs to 315 residues: Protoheme IX farnesyltransferase (315 aa).

A run of 9 helical transmembrane segments spans residues 32 to 52, 53 to 73, 93 to 113, 120 to 140, 153 to 173, 180 to 200, 226 to 246, 249 to 269, and 295 to 315; these read VMSL…GHMN, PVLA…SGAL, IPAG…LSAF, LMVN…YAVI, IVIG…AATG, LVLF…LSLF, ALFY…MGFA, FYGV…WRLW, and IFAV…FGVF.

It belongs to the UbiA prenyltransferase family. Protoheme IX farnesyltransferase subfamily.

It is found in the cell inner membrane. The catalysed reaction is heme b + (2E,6E)-farnesyl diphosphate + H2O = Fe(II)-heme o + diphosphate. The protein operates within porphyrin-containing compound metabolism; heme O biosynthesis; heme O from protoheme: step 1/1. Functionally, converts heme B (protoheme IX) to heme O by substitution of the vinyl group on carbon 2 of heme B porphyrin ring with a hydroxyethyl farnesyl side group. This is Protoheme IX farnesyltransferase from Brucella suis (strain ATCC 23445 / NCTC 10510).